Here is a 422-residue protein sequence, read N- to C-terminus: Biofilm regulator 1 (422 aa).

Composition is skewed to low complexity over residues 1-19 and 36-45; these read MSSS…TTSA and SGGSNNGNGS. Disordered stretches follow at residues 1-86 and 116-207; these read MSSS…KCPP and RLSS…PSHP. Polar residues predominate over residues 46–61; sequence ALKSQISPRLSDTSRI. 2 stretches are compositionally biased toward low complexity: residues 69-81 and 120-143; these read TSGS…SSTP and PTLP…LSPV. Residues 146–159 show a composition bias toward polar residues; it reads VINTPPQQPQSVSA. The segment covering 160 to 194 has biased composition (low complexity); sequence STSPNTQYQYYQYQQQSSPIQQQQQQQQATPAATP. The span at 195–205 shows a compositional bias: polar residues; it reads TVMQMAQNQPS. Residues 282 to 307 form a GATA-type zinc finger; the sequence is CHRCGTTETPEWRRGPKGVRTLCNAC.

In terms of assembly, interacts with HDA1.

It is found in the nucleus. Functionally, transcription factor required for hyphal growth, biofilm formation, and virulence. Promotes formation of both conventional and pheromone-stimulated biofilms. Binds and recruits HDA1 to promoters of hypha-specific genes in a rapamycin-dependent manner. Involved in the switch between two heritable states, the white and opaque states. These two cell types differ in many characteristics, including cell structure, mating competence, and virulence. Each state is heritable for many generations, and switching between states occurs stochastically at low frequency. The polypeptide is Biofilm regulator 1 (BRG1) (Candida albicans (strain SC5314 / ATCC MYA-2876) (Yeast)).